A 797-amino-acid chain; its full sequence is MEDDGKSSPKLPIPGKRNILITSALPYVNNVPHLGNIIGCVLSADVYARYCRLRGYNAIYICGTDEYGTATETKALEENCTPKEICDKYHAIHKEVYDWFGISFDKFGRTSTPEQTEVCQAIFNKLWDNKWLSENTMQQLYCDTCKKFLADRLVEGSCPFEGCNYDSARGDQCEKCGKLLNPTELKDPKCKVCQNTPRIRDTDHLFIELPLLKDRLEAYIKKTSVTGSWSQNAIQTTNAWLRDGLRQRCITRDLKWGVPVPHEKYKDKVFYVWFDAPIGYVSITSCYTSEWEKWWKNPENVELYQFMGKDNVPFHTVMFPSTQLGTEENWTLMKTISVTEYLNYEDGKFSKSKGVGVFGNDVKDTNIPVEVWRYYLLTNRPEVSDTSFSWTDLQAKLNGELLSNLGNFVNRVLSFIAKPDNAGYGSVIPDAHDAESHSLTKSLAEKVEKFVAEYVEAMEKVKLKQGLKTAMLISSEGNYYLQASQFWKLYKEDKPLCAVVIRTAAGLVHLLAQLLEPFMPSFSCEVFKQLNLPPQFSLSDERGEVLLASRPWDILPPSHRIGTPQPLFKELENDEVARYREKFAGSQSDRRARDEAANLADQLNKTKLSDAKKQKASSKGGGKPKPQPAADREITMARLDIRVGKIVKAEKHPKADALYVEEIDVGGGEIRTVVSGLVKYIPLEEMQNRMVCVLCNLKPAKMRDIVSQAMVLAASSSDGSKVELVEPPKTANIGERVTFPGFEGEPDDVLNPKKKVWETLLVDLNTKENLVACYKDVPFTTSAGVCKVSSISNGTIR.

A 'HIGH' region motif is present at residues 26–36 (PYVNNVPHLGN). The 'KMSKS' region motif lies at 348 to 352 (KFSKS). Lys351 serves as a coordination point for ATP. The segment at 601–634 (DQLNKTKLSDAKKQKASSKGGGKPKPQPAADREI) is disordered. A tRNA-binding domain is found at 635 to 738 (TMARLDIRVG…KTANIGERVT (104 aa)).

The protein belongs to the class-I aminoacyl-tRNA synthetase family.

It is found in the cytoplasm. Its subcellular location is the cytosol. The catalysed reaction is tRNA(Met) + L-methionine + ATP = L-methionyl-tRNA(Met) + AMP + diphosphate. The protein is Methionine--tRNA ligase, cytoplasmic of Arabidopsis thaliana (Mouse-ear cress).